The following is a 347-amino-acid chain: N-acetyl-gamma-glutamyl-phosphate reductase (347 aa).

The active site involves Cys-153.

It belongs to the NAGSA dehydrogenase family. Type 1 subfamily.

It localises to the cytoplasm. The catalysed reaction is N-acetyl-L-glutamate 5-semialdehyde + phosphate + NADP(+) = N-acetyl-L-glutamyl 5-phosphate + NADPH + H(+). It participates in amino-acid biosynthesis; L-arginine biosynthesis; N(2)-acetyl-L-ornithine from L-glutamate: step 3/4. Catalyzes the NADPH-dependent reduction of N-acetyl-5-glutamyl phosphate to yield N-acetyl-L-glutamate 5-semialdehyde. In Mycobacterium leprae (strain Br4923), this protein is N-acetyl-gamma-glutamyl-phosphate reductase.